The primary structure comprises 338 residues: Glycerol-3-phosphate dehydrogenase [NAD(P)+] (338 aa).

The NADPH site is built by serine 13, tryptophan 14, and lysine 108. Residues lysine 108, glycine 139, and serine 141 each contribute to the sn-glycerol 3-phosphate site. Alanine 143 is a binding site for NADPH. 5 residues coordinate sn-glycerol 3-phosphate: lysine 194, aspartate 247, serine 257, arginine 258, and asparagine 259. The active-site Proton acceptor is lysine 194. Arginine 258 lines the NADPH pocket. Residues valine 282 and glutamate 284 each coordinate NADPH.

The protein belongs to the NAD-dependent glycerol-3-phosphate dehydrogenase family.

It localises to the cytoplasm. It carries out the reaction sn-glycerol 3-phosphate + NAD(+) = dihydroxyacetone phosphate + NADH + H(+). The catalysed reaction is sn-glycerol 3-phosphate + NADP(+) = dihydroxyacetone phosphate + NADPH + H(+). The protein operates within membrane lipid metabolism; glycerophospholipid metabolism. In terms of biological role, catalyzes the reduction of the glycolytic intermediate dihydroxyacetone phosphate (DHAP) to sn-glycerol 3-phosphate (G3P), the key precursor for phospholipid synthesis. This chain is Glycerol-3-phosphate dehydrogenase [NAD(P)+], found in Streptococcus agalactiae serotype V (strain ATCC BAA-611 / 2603 V/R).